The sequence spans 320 residues: Transaldolase (320 aa).

Lysine 126 serves as the catalytic Schiff-base intermediate with substrate.

It belongs to the transaldolase family. Type 1 subfamily. In terms of assembly, homodimer.

Its subcellular location is the cytoplasm. It carries out the reaction D-sedoheptulose 7-phosphate + D-glyceraldehyde 3-phosphate = D-erythrose 4-phosphate + beta-D-fructose 6-phosphate. It functions in the pathway carbohydrate degradation; pentose phosphate pathway; D-glyceraldehyde 3-phosphate and beta-D-fructose 6-phosphate from D-ribose 5-phosphate and D-xylulose 5-phosphate (non-oxidative stage): step 2/3. In terms of biological role, transaldolase is important for the balance of metabolites in the pentose-phosphate pathway. This Bordetella pertussis (strain Tohama I / ATCC BAA-589 / NCTC 13251) protein is Transaldolase.